The primary structure comprises 1023 residues: Vacuolar membrane protease (1023 aa).

Over 1 to 80 (MRAAGCGGTG…FFRSVFGYRK (80 aa)) the chain is Cytoplasmic. Over residues 17 to 48 (KLSRSISQHQPKSMPQASVNSEQNPSVPNSPS) the composition is skewed to polar residues. The disordered stretch occupies residues 17–59 (KLSRSISQHQPKSMPQASVNSEQNPSVPNSPSAHKPARSQSAQ). The helical transmembrane segment at 81 to 101 (TSLTFLVALVFAATLLLSWAD) threads the bilayer. The Vacuolar portion of the chain corresponds to 102–425 (SSLDFSVDMP…VVFSVSQVVS (324 aa)). Asn170 and Asn200 each carry an N-linked (GlcNAc...) asparagine glycan. Zn(2+)-binding residues include His214 and Asp226. Residue Glu259 is the Proton acceptor of the active site. Zn(2+)-binding residues include Glu260, Glu285, and His357. Residues 426–446 (ANIALLVVVPVASLLLLFIIF) form a helical membrane-spanning segment. The Cytoplasmic segment spans residues 447 to 461 (RCNKGWGFNFVNAIK). The helical transmembrane segment at 462 to 482 (YPLSLVASVLVLTFVSQVIIV) threads the bilayer. Residues 483-491 (PSNPFLVNS) are Vacuolar-facing. Residue Asn490 is glycosylated (N-linked (GlcNAc...) asparagine). Residues 492–512 (SIGLLVATLFSLFLLLNYIVL) form a helical membrane-spanning segment. Over 513–529 (NGLNLVFKSFKGHQHDE) the chain is Cytoplasmic. Residues 530–550 (KLIVMCESSFLTWILLLWSTV) form a helical membrane-spanning segment. At 551–564 (KLSHNKFGDDHTGE) the chain is on the vacuolar side. A helical transmembrane segment spans residues 565–585 (LFIPILFSLQAVACFLGFLGW). At 586 to 643 (CFKPSKKVKVSREEHQPLLSSNGSNYGTQDDDDSLAPSSSLSLQSGFSENCEVHETKS) the chain is on the cytoplasmic side. A compositionally biased stretch (polar residues) spans 604-613 (LSSNGSNYGT). Positions 604–626 (LSSNGSNYGTQDDDDSLAPSSSL) are disordered. Residues 644 to 664 (FSYDWLVQFLVIVPISSLIIF) form a helical membrane-spanning segment. The Vacuolar segment spans residues 665–687 (NSGSLILNGLNKSIQESLSAQNL). The N-linked (GlcNAc...) asparagine glycan is linked to Asn675. The helical transmembrane segment at 688-708 (IYKFIQIFVIVWSIPFLPFIF) threads the bilayer. Topologically, residues 709-712 (KLNR) are cytoplasmic. Residues 713-733 (IIVLALSLVLLYGFFAVNITD) traverse the membrane as a helical segment. Residues 734–1023 (AFNDANPLKL…MVSVTKYIEV (290 aa)) lie on the Vacuolar side of the membrane. N-linked (GlcNAc...) asparagine glycosylation is found at Asn815, Asn858, and Asn892.

Belongs to the peptidase M28 family. Zn(2+) is required as a cofactor.

It is found in the vacuole membrane. Functionally, may be involved in vacuolar sorting and osmoregulation. This chain is Vacuolar membrane protease, found in Clavispora lusitaniae (strain ATCC 42720) (Yeast).